A 704-amino-acid polypeptide reads, in one-letter code: Protein NBR1 homolog (704 aa).

N-acetylmethionine is present on M1. One can recognise a PB1 domain in the interval 7–92; it reads ALVVKVSYGG…KFLKINVNAG (86 aa). Composition is skewed to polar residues over residues 95-108, 171-189, and 223-233; these read TNSAAPESSGSSTP, PQESSPCSPVTKPGSSGAS, and HSKTSGHVPNS. 2 disordered regions span residues 95–114 and 171–233; these read TNSAAPESSGSSTPAGMPNP and PQES…VPNS. The segment at 286–336 adopts a ZZ-type; degenerate zinc-finger fold; that stretch reads HKGIRCDGCGVLPITGPRFKSKVKEDYDLCTICYSVMGNEGDYTRMDKPVS. C291, C294, C315, and C318 together coordinate Zn(2+). The UBA domain occupies 657–701; sequence GVSEWDPILEELQEMGFCDDVTNKRLLKKNNGSIKGVVMDLLTGE. Residues 661–664 carry the LIR motif; that stretch reads WDPI.

Homodimer. Interacts with ATG8A, ATG8B, ATG8C, ATG8D, ATG8F and ATG8I. Binds to ubiquitin.

The protein resides in the cytoplasm. It is found in the vacuole. In terms of biological role, autophagic substrate degraded in the vacuole by non-selective autophagy. Requires ATG8 protein expression to be recognized as an autophagic substrate. Acts probably as a receptor for autophagosomal degradation of ubiquitinated proteins. Targets ubiquitinated protein aggregates derived from denatured or damaged non-native proteins generated under stress conditions. Functions additively with the E3 ubiquitin-protein ligase CHIP for autophagosomal degradation of proteotoxic aggregates formed under stress conditions. This chain is Protein NBR1 homolog, found in Arabidopsis thaliana (Mouse-ear cress).